Consider the following 140-residue polypeptide: Actin-depolymerizing factor 10 (140 aa).

Position 6 is a phosphoserine (Ser-6). The ADF-H domain maps to Gly-7 to Asn-139.

Belongs to the actin-binding proteins ADF family.

The protein resides in the cytoplasm. The protein localises to the cytoskeleton. Its function is as follows. Actin-depolymerizing protein. Severs actin filaments (F-actin) and binds to actin monomers. The polypeptide is Actin-depolymerizing factor 10 (ADF10) (Arabidopsis thaliana (Mouse-ear cress)).